The following is a 757-amino-acid chain: 5-methyltetrahydropteroyltriglutamate--homocysteine methyltransferase (757 aa).

Residues 15-18 and Lys-114 each bind 5-methyltetrahydropteroyltri-L-glutamate; that span reads RELK. Residues 428–430 and Glu-481 contribute to the L-homocysteine site; that span reads IGS. Residues 428-430 and Glu-481 each bind L-methionine; that span reads IGS. 5-methyltetrahydropteroyltri-L-glutamate-binding positions include 512 to 513 and Trp-558; that span reads RC. Asp-596 contacts L-homocysteine. Position 596 (Asp-596) interacts with L-methionine. Glu-602 contributes to the 5-methyltetrahydropteroyltri-L-glutamate binding site. His-639, Cys-641, and Glu-663 together coordinate Zn(2+). Residue His-692 is the Proton donor of the active site. Position 724 (Cys-724) interacts with Zn(2+).

This sequence belongs to the vitamin-B12 independent methionine synthase family. Requires Zn(2+) as cofactor.

The enzyme catalyses 5-methyltetrahydropteroyltri-L-glutamate + L-homocysteine = tetrahydropteroyltri-L-glutamate + L-methionine. The protein operates within amino-acid biosynthesis; L-methionine biosynthesis via de novo pathway; L-methionine from L-homocysteine (MetE route): step 1/1. Its function is as follows. Catalyzes the transfer of a methyl group from 5-methyltetrahydrofolate to homocysteine resulting in methionine formation. This Lactococcus lactis subsp. cremoris (strain MG1363) protein is 5-methyltetrahydropteroyltriglutamate--homocysteine methyltransferase.